Here is a 709-residue protein sequence, read N- to C-terminus: Polyribonucleotide nucleotidyltransferase (709 aa).

Residues Asp-482 and Asp-488 each contribute to the Mg(2+) site. In terms of domain architecture, KH spans Pro-549–Ile-608. Positions Gly-618–Lys-686 constitute an S1 motif domain.

Belongs to the polyribonucleotide nucleotidyltransferase family. The cofactor is Mg(2+).

It is found in the cytoplasm. It catalyses the reaction RNA(n+1) + phosphate = RNA(n) + a ribonucleoside 5'-diphosphate. Functionally, involved in mRNA degradation. Catalyzes the phosphorolysis of single-stranded polyribonucleotides processively in the 3'- to 5'-direction. The sequence is that of Polyribonucleotide nucleotidyltransferase from Heliobacterium modesticaldum (strain ATCC 51547 / Ice1).